The primary structure comprises 628 residues: Netrin-4 (628 aa).

The first 19 residues, 1 to 19, serve as a signal peptide directing secretion; it reads MGSCARLLLLWGCSAVAAG. One can recognise a Laminin N-terminal domain in the interval 30 to 261; sequence CEKACNPRMG…AVYDFIVKGS (232 aa). N-linked (GlcNAc...) asparagine glycosylation is found at Asn56 and Asn163. Intrachain disulfides connect Cys262-Cys271, Cys264-Cys293, Cys295-Cys304, Cys307-Cys329, Cys332-Cys341, Cys334-Cys359, Cys362-Cys371, Cys374-Cys392, Cys395-Cys413, Cys397-Cys420, Cys422-Cys431, and Cys434-Cys446. Laminin EGF-like domains are found at residues 262 to 331, 332 to 394, and 395 to 448; these read CFCN…ECRT, CKCN…ACKA, and CSCH…GCRP. Asn353 carries an N-linked (GlcNAc...) asparagine glycan. A glycan (N-linked (GlcNAc...) asparagine) is linked at Asn483. 2 disulfides stabilise this stretch: Cys506/Cys576 and Cys520/Cys627. The region spanning 506–627 is the NTR domain; sequence CECKEQVLGN…RVMHILKRDC (122 aa).

As to quaternary structure, may form a homodimer. Expressed in kidney, liver, heart, ovary, testis, retina, brain, olfactory bulb, and widely expressed in embryo.

It localises to the secreted. Its subcellular location is the extracellular space. It is found in the extracellular matrix. The protein resides in the basement membrane. May play an important role in neural, kidney and vascular development. Promotes neurite elongation from olfactory bulb explants. This chain is Netrin-4 (Ntn4), found in Mus musculus (Mouse).